Consider the following 288-residue polypeptide: Glucose uptake protein GlcU (288 aa).

10 consecutive transmembrane segments (helical) span residues 4-26 (LIALLPALFWGSVVLINVLVGGG), 33-51 (GTTFGALIIGIILLLTGNA), 56-75 (LTIIIVGLISGAFWALGQGY), 82-104 (LIGVSKTMPISTGLQLVGTTLFS), 114-136 (GVQVTLGLVAMVLLVIGIALTSI), 148-170 (NFGKAMPILLISTVGYVVYVVVA), 180-197 (ALFFQSIGMAIGGLILSA), 206-225 (TLWNLIPGIVWGIGNLFMFY), 230-252 (VGVATSFSFSQLLVIVSTLGGIF), and 264-283 (IGIWAGIVLIVIAPLYSEIL).

This sequence belongs to the GRP transporter (TC 2.A.7.5) family.

The protein resides in the cell membrane. In terms of biological role, involved in the uptake of glucose. In Staphylococcus xylosus, this protein is Glucose uptake protein GlcU (glcU).